We begin with the raw amino-acid sequence, 321 residues long: Basic peroxidase (321 aa).

The N-terminal stretch at 1-30 is a signal peptide; it reads MSYHKSSGTILMVPLFMLLISVNYFMSCNA. Gln31 carries the pyrrolidone carboxylic acid modification. Intrachain disulfides connect Cys41–Cys117, Cys74–Cys79, Cys123–Cys317, and Cys202–Cys228. His72 acts as the Proton acceptor in catalysis. 5 residues coordinate Ca(2+): Asp73, Val76, Gly78, Asp80, and Ser82. Pro165 is a substrate binding site. Residue His195 participates in heme b binding. Thr196 is a binding site for Ca(2+). 2 N-linked (GlcNAc...) asparagine glycosylation sites follow: Asn211 and Asn221. Asp241, Thr244, and Asp249 together coordinate Ca(2+).

This sequence belongs to the peroxidase family. Classical plant (class III) peroxidase subfamily. Heme b is required as a cofactor. The cofactor is Ca(2+). In terms of processing, N-glycosylated. Expressed in tracheary elements, roots, young and old hypocotyls, and stems in the partially glycosylated form and in roots and young hypocotyls in the fully glycosylated form. None of the isoforms is significantly expressed in leaves or cotyledons.

It localises to the secreted. It catalyses the reaction 2 a phenolic donor + H2O2 = 2 a phenolic radical donor + 2 H2O. Functionally, removal of H(2)O(2), oxidation of toxic reductants, biosynthesis and degradation of lignin, suberization, auxin catabolism, response to environmental stresses such as wounding, pathogen attack and oxidative stress. These functions might be dependent on each isozyme/isoform in each plant tissue. Involved in the synthesis of highly polymerized lignins. The polypeptide is Basic peroxidase (POD1) (Zinnia elegans (Garden zinnia)).